A 220-amino-acid polypeptide reads, in one-letter code: MTQDEMKKAAGWAALKYVEKDSIVGVGTGSTVNHFIDALATMKADIEGAVSSSEASTQKMKALGIPVYDLNSVDRLSVYVDGADEINDHMDMIKGGGAALTREKIVAAVAEKFICIVDNTKQVDILGEFPLPVEVIPMARSYVARQLVKLGGDPVYREGVVTDNGNVILDVYNLKILNPKELESQINEIVGVVTNGLFAKRGADVLLVGTPDGVKTFTAK.

Substrate contacts are provided by residues 28–31, 81–84, and 94–97; these read TGST, DGAD, and KGGG. The active-site Proton acceptor is E103. K121 lines the substrate pocket.

The protein belongs to the ribose 5-phosphate isomerase family. As to quaternary structure, homodimer.

It catalyses the reaction aldehydo-D-ribose 5-phosphate = D-ribulose 5-phosphate. The protein operates within carbohydrate degradation; pentose phosphate pathway; D-ribose 5-phosphate from D-ribulose 5-phosphate (non-oxidative stage): step 1/1. In terms of biological role, catalyzes the reversible conversion of ribose-5-phosphate to ribulose 5-phosphate. The chain is Ribose-5-phosphate isomerase A from Shewanella baltica (strain OS185).